A 180-amino-acid polypeptide reads, in one-letter code: Large ribosomal subunit protein uL5 (180 aa).

This sequence belongs to the universal ribosomal protein uL5 family. Part of the 50S ribosomal subunit; part of the 5S rRNA/L5/L18/L25 subcomplex. Contacts the 5S rRNA and the P site tRNA. Forms a bridge to the 30S subunit in the 70S ribosome.

In terms of biological role, this is one of the proteins that bind and probably mediate the attachment of the 5S RNA into the large ribosomal subunit, where it forms part of the central protuberance. In the 70S ribosome it contacts protein S13 of the 30S subunit (bridge B1b), connecting the 2 subunits; this bridge is implicated in subunit movement. Contacts the P site tRNA; the 5S rRNA and some of its associated proteins might help stabilize positioning of ribosome-bound tRNAs. The polypeptide is Large ribosomal subunit protein uL5 (Chlamydia pneumoniae (Chlamydophila pneumoniae)).